Consider the following 182-residue polypeptide: Large ribosomal subunit protein uL10 (182 aa).

It belongs to the universal ribosomal protein uL10 family. In terms of assembly, part of the ribosomal stalk of the 50S ribosomal subunit. The N-terminus interacts with L11 and the large rRNA to form the base of the stalk. The C-terminus forms an elongated spine to which L12 dimers bind in a sequential fashion forming a multimeric L10(L12)X complex.

Forms part of the ribosomal stalk, playing a central role in the interaction of the ribosome with GTP-bound translation factors. The sequence is that of Large ribosomal subunit protein uL10 from Herminiimonas arsenicoxydans.